A 111-amino-acid polypeptide reads, in one-letter code: Probable 4-amino-4-deoxy-L-arabinose-phosphoundecaprenol flippase subunit ArnE (111 aa).

Helical transmembrane passes span 38-58, 61-81, and 91-111; these read LWLGLALICMGAAMVLWLLVL, LPVGIAYPMLSLNFVWVTLAA, and PRHWLGVALIISGIIILGSAA. The 70-residue stretch at 40–109 folds into the EamA domain; that stretch reads LGLALICMGA…IISGIIILGS (70 aa).

Belongs to the ArnE family. Heterodimer of ArnE and ArnF.

Its subcellular location is the cell inner membrane. It participates in bacterial outer membrane biogenesis; lipopolysaccharide biosynthesis. In terms of biological role, translocates 4-amino-4-deoxy-L-arabinose-phosphoundecaprenol (alpha-L-Ara4N-phosphoundecaprenol) from the cytoplasmic to the periplasmic side of the inner membrane. In Salmonella choleraesuis (strain SC-B67), this protein is Probable 4-amino-4-deoxy-L-arabinose-phosphoundecaprenol flippase subunit ArnE.